A 264-amino-acid polypeptide reads, in one-letter code: Acyl-[acyl-carrier-protein]--UDP-N-acetylglucosamine O-acyltransferase (264 aa).

Belongs to the transferase hexapeptide repeat family. LpxA subfamily. In terms of assembly, homotrimer.

Its subcellular location is the cytoplasm. The catalysed reaction is a (3R)-hydroxyacyl-[ACP] + UDP-N-acetyl-alpha-D-glucosamine = a UDP-3-O-[(3R)-3-hydroxyacyl]-N-acetyl-alpha-D-glucosamine + holo-[ACP]. Its pathway is glycolipid biosynthesis; lipid IV(A) biosynthesis; lipid IV(A) from (3R)-3-hydroxytetradecanoyl-[acyl-carrier-protein] and UDP-N-acetyl-alpha-D-glucosamine: step 1/6. Involved in the biosynthesis of lipid A, a phosphorylated glycolipid that anchors the lipopolysaccharide to the outer membrane of the cell. The sequence is that of Acyl-[acyl-carrier-protein]--UDP-N-acetylglucosamine O-acyltransferase from Chlorobaculum tepidum (strain ATCC 49652 / DSM 12025 / NBRC 103806 / TLS) (Chlorobium tepidum).